A 262-amino-acid chain; its full sequence is Transcription factor bHLH81 (262 aa).

The disordered stretch occupies residues M1 to L29. A compositionally biased stretch (gly residues) spans S8–S25. Residues C190 to L240 form the bHLH domain.

Homodimer. Expressed in flowers.

It localises to the nucleus. In Arabidopsis thaliana (Mouse-ear cress), this protein is Transcription factor bHLH81 (BHLH81).